Here is a 71-residue protein sequence, read N- to C-terminus: uncharacterized protein (71 aa).

This sequence belongs to the ycf40 family.

It is found in the plastid. The protein localises to the chloroplast. This is an uncharacterized protein from Pyropia yezoensis (Susabi-nori).